Here is a 164-residue protein sequence, read N- to C-terminus: ATP synthase subunit b 2 (164 aa).

A helical transmembrane segment spans residues 4-24; that stretch reads TFWAFVGLVLFLALLVYFQIP.

It belongs to the ATPase B chain family. In terms of assembly, F-type ATPases have 2 components, F(1) - the catalytic core - and F(0) - the membrane proton channel. F(1) has five subunits: alpha(3), beta(3), gamma(1), delta(1), epsilon(1). F(0) has three main subunits: a(1), b(2) and c(10-14). The alpha and beta chains form an alternating ring which encloses part of the gamma chain. F(1) is attached to F(0) by a central stalk formed by the gamma and epsilon chains, while a peripheral stalk is formed by the delta and b chains.

It localises to the cell inner membrane. In terms of biological role, f(1)F(0) ATP synthase produces ATP from ADP in the presence of a proton or sodium gradient. F-type ATPases consist of two structural domains, F(1) containing the extramembraneous catalytic core and F(0) containing the membrane proton channel, linked together by a central stalk and a peripheral stalk. During catalysis, ATP synthesis in the catalytic domain of F(1) is coupled via a rotary mechanism of the central stalk subunits to proton translocation. Component of the F(0) channel, it forms part of the peripheral stalk, linking F(1) to F(0). The chain is ATP synthase subunit b 2 from Bartonella tribocorum (strain CIP 105476 / IBS 506).